The primary structure comprises 90 residues: Auxin-responsive protein SAUR19 (90 aa).

The protein belongs to the ARG7 family. In terms of assembly, interacts with and inhibits PP2C-D subfamily of type 2C phosphatases such as PP2C67/PP2C-D1, PP2C64/PP2C-D5 and PP2C46/PP2C-D6.

It is found in the cell membrane. In terms of biological role, provide a mechanistic link between auxin and plasma membrane H(+)-ATPases (PM H(+)-ATPases, e.g. AHA1 and AHA2), and triggers PM H(+)-ATPases activity by promoting phosphorylation of their C-terminal autoinhibitory domain as a result of PP2C-D subfamily of type 2C phosphatases inhibition, thus leading to the acidification of the apoplast and the facilitation of solutes and water uptake to drive cell expansion. Prevents the apical hook maintenance of etiolated seedlings. Functions as positive effectors of cell expansion through modulation of auxin transport. This chain is Auxin-responsive protein SAUR19, found in Arabidopsis thaliana (Mouse-ear cress).